Here is a 272-residue protein sequence, read N- to C-terminus: Regulatory protein RecX (272 aa).

This sequence belongs to the RecX family.

It is found in the cytoplasm. Modulates RecA activity. This Oceanobacillus iheyensis (strain DSM 14371 / CIP 107618 / JCM 11309 / KCTC 3954 / HTE831) protein is Regulatory protein RecX.